Here is a 287-residue protein sequence, read N- to C-terminus: Toxin zeta (287 aa).

40 to 47 provides a ligand contact to ATP; it reads GQPGSGKT. The segment at 250–287 is disordered; sequence MVQNQHQETPEFKAIQQKMESLQPPTPPIPKTPKLPGI. Residues 273–287 show a composition bias toward pro residues; the sequence is PPTPPIPKTPKLPGI.

The protein belongs to the zeta toxin family. In the presence of the epsilon antitoxin, forms an inactive PezA(2)PezT(2) heterotetramer.

It catalyses the reaction UDP-N-acetyl-alpha-D-glucosamine + ATP = UDP-N-acetyl-alpha-D-glucosamine 3'-phosphate + ADP + H(+). Its function is as follows. Toxic component of a type II toxin-antitoxin (TA) system. Phosphorylates UDP-N-acetyl-D-glucosamine (UNAG) on the 3'-hydroxyl group of the N-acetyl-D-glucosamine moiety, yielding UNAG-3P. UNAG-3P inhibits MurA, the first committed step in cell wall synthesis, which is then blocked. Phosphorylation is inhibited by cognate epsilon antitoxin. Part of a postsegregational killing (PSK) system involved in the killing of plasmid-free cells. The zeta toxin induces programmed cell death. This chain is Toxin zeta, found in Streptococcus agalactiae.